Here is a 338-residue protein sequence, read N- to C-terminus: Glycerol-3-phosphate dehydrogenase [NAD(P)+] (338 aa).

Serine 14, tyrosine 15, histidine 35, and lysine 109 together coordinate NADPH. Residues lysine 109, glycine 138, and threonine 140 each coordinate sn-glycerol 3-phosphate. Alanine 142 contributes to the NADPH binding site. 5 residues coordinate sn-glycerol 3-phosphate: lysine 194, aspartate 247, serine 257, arginine 258, and asparagine 259. Lysine 194 functions as the Proton acceptor in the catalytic mechanism. NADPH is bound at residue arginine 258. The NADPH site is built by valine 282 and glutamate 284.

This sequence belongs to the NAD-dependent glycerol-3-phosphate dehydrogenase family.

The protein resides in the cytoplasm. It carries out the reaction sn-glycerol 3-phosphate + NAD(+) = dihydroxyacetone phosphate + NADH + H(+). The catalysed reaction is sn-glycerol 3-phosphate + NADP(+) = dihydroxyacetone phosphate + NADPH + H(+). It functions in the pathway membrane lipid metabolism; glycerophospholipid metabolism. Its function is as follows. Catalyzes the reduction of the glycolytic intermediate dihydroxyacetone phosphate (DHAP) to sn-glycerol 3-phosphate (G3P), the key precursor for phospholipid synthesis. The protein is Glycerol-3-phosphate dehydrogenase [NAD(P)+] of Shewanella sp. (strain MR-4).